We begin with the raw amino-acid sequence, 239 residues long: Lactate utilization protein A 1 (239 aa).

This sequence belongs to the LutA/YkgE family.

Its function is as follows. Is involved in L-lactate degradation and allows cells to grow with lactate as the sole carbon source. The sequence is that of Lactate utilization protein A 1 from Bacillus cereus (strain AH820).